The primary structure comprises 459 residues: Cysteine--tRNA ligase (459 aa).

Residue cysteine 27 coordinates Zn(2+). The 'HIGH' region signature appears at 29–39 (VTVYDDCHIGH). Residues cysteine 208, histidine 233, and glutamate 237 each contribute to the Zn(2+) site. The 'KMSKS' region motif lies at 265-269 (KMSKS). Position 268 (lysine 268) interacts with ATP.

The protein belongs to the class-I aminoacyl-tRNA synthetase family. In terms of assembly, monomer. It depends on Zn(2+) as a cofactor.

The protein resides in the cytoplasm. The catalysed reaction is tRNA(Cys) + L-cysteine + ATP = L-cysteinyl-tRNA(Cys) + AMP + diphosphate. This is Cysteine--tRNA ligase from Francisella tularensis subsp. novicida (strain U112).